The primary structure comprises 147 residues: Large ribosomal subunit protein uL13 (147 aa).

Belongs to the universal ribosomal protein uL13 family. As to quaternary structure, part of the 50S ribosomal subunit.

Its function is as follows. This protein is one of the early assembly proteins of the 50S ribosomal subunit, although it is not seen to bind rRNA by itself. It is important during the early stages of 50S assembly. This is Large ribosomal subunit protein uL13 from Mycobacterium leprae (strain Br4923).